A 691-amino-acid chain; its full sequence is WD repeat-containing protein 48 homolog (691 aa).

8 WD repeats span residues 27–82, 88–130, 133–168, 180–219, 222–261, 264–303, 306–347, and 399–438; these read LHRS…PVQY, RHTD…YLDS, LHTD…NSNF, GCKN…KPMK, GHSD…NIAT, AHEE…KFQV, KEEA…QNSN, and SGAP…KVKE.

It belongs to the WD repeat WDR48 family. Interacts with usp-46; the interaction increases the catalytic activity of usp-46 in the presence of wdr-20.

Functionally, together with wdr-20, binds to and stimulates the activity of the deubiquitinating enzyme usp-46, leading to deubiquitination and stabilization of the glr-1 glutamate receptor. The protein is WD repeat-containing protein 48 homolog (wdr-48) of Caenorhabditis briggsae.